Reading from the N-terminus, the 906-residue chain is uncharacterized protein (906 aa).

2 disordered regions span residues 231-322 and 865-906; these read KEDA…PSTI and AGAY…DEDE. Low complexity predominate over residues 236–250; sequence TTKQTTTTTTTTPQT. The span at 264–281 shows a compositional bias: pro residues; that stretch reads TPTPAPAPKPTTPKPTPA. Positions 302–314 are enriched in polar residues; the sequence is SVNNIPTPSDTNE. Over residues 867–906 the composition is skewed to acidic residues; that stretch reads AYEDDDDDEGEGNEDDEDNDENEDEDEGEGEGDSSEDEDE.

This is an uncharacterized protein from Dictyostelium sp. (strain GA11) (Slime mold).